The primary structure comprises 270 residues: MPELPEVETTRRGIAPHLVGQRVSRVVVRDRRLRWPIPEDLDVRLSGQCIVSVERRAKYLLINAEVGTLISHLGMSGNLRLVELGLPAAKHEHVDIELESGLMLRYTDPRRFGAMLWSLDPLNHELLIRLGPEPLTDLFDGERLFQLSRGRSMAVKPFIMDNAVVVGVGNIYATEALFAAGIDPRREAGGISRARYLKLAIEIKRVLAAAIEQGGTTLRDFIGGDGQPGYFQQELFVYGRGGQPCKVCGTELREVKLGQRASVFCPKCQR.

P2 acts as the Schiff-base intermediate with DNA in catalysis. E3 serves as the catalytic Proton donor. The Proton donor; for beta-elimination activity role is filled by K58. Residues H91, R110, and R151 each contribute to the DNA site. The FPG-type zinc-finger motif lies at 236 to 270 (FVYGRGGQPCKVCGTELREVKLGQRASVFCPKCQR). R260 serves as the catalytic Proton donor; for delta-elimination activity.

This sequence belongs to the FPG family. Monomer. Requires Zn(2+) as cofactor.

It carries out the reaction Hydrolysis of DNA containing ring-opened 7-methylguanine residues, releasing 2,6-diamino-4-hydroxy-5-(N-methyl)formamidopyrimidine.. The catalysed reaction is 2'-deoxyribonucleotide-(2'-deoxyribose 5'-phosphate)-2'-deoxyribonucleotide-DNA = a 3'-end 2'-deoxyribonucleotide-(2,3-dehydro-2,3-deoxyribose 5'-phosphate)-DNA + a 5'-end 5'-phospho-2'-deoxyribonucleoside-DNA + H(+). Its function is as follows. Involved in base excision repair of DNA damaged by oxidation or by mutagenic agents. Acts as a DNA glycosylase that recognizes and removes damaged bases. Has a preference for oxidized purines, such as 7,8-dihydro-8-oxoguanine (8-oxoG). Has AP (apurinic/apyrimidinic) lyase activity and introduces nicks in the DNA strand. Cleaves the DNA backbone by beta-delta elimination to generate a single-strand break at the site of the removed base with both 3'- and 5'-phosphates. The chain is Formamidopyrimidine-DNA glycosylase from Pseudomonas entomophila (strain L48).